The chain runs to 355 residues: Erythronate-4-phosphate dehydrogenase (355 aa).

Substrate contacts are provided by Ser-45 and Thr-66. Asp-146 lines the NAD(+) pocket. Arg-206 is an active-site residue. Residue Asp-229 coordinates NAD(+). The active site involves Glu-234. His-251 serves as the catalytic Proton donor. Gly-254 lines the NAD(+) pocket. Residue Tyr-255 coordinates substrate.

The protein belongs to the D-isomer specific 2-hydroxyacid dehydrogenase family. PdxB subfamily. As to quaternary structure, homodimer.

It localises to the cytoplasm. The enzyme catalyses 4-phospho-D-erythronate + NAD(+) = (R)-3-hydroxy-2-oxo-4-phosphooxybutanoate + NADH + H(+). The protein operates within cofactor biosynthesis; pyridoxine 5'-phosphate biosynthesis; pyridoxine 5'-phosphate from D-erythrose 4-phosphate: step 2/5. Functionally, catalyzes the oxidation of erythronate-4-phosphate to 3-hydroxy-2-oxo-4-phosphonooxybutanoate. The protein is Erythronate-4-phosphate dehydrogenase of Acinetobacter baylyi (strain ATCC 33305 / BD413 / ADP1).